We begin with the raw amino-acid sequence, 296 residues long: uncharacterized protein (296 aa).

One can recognise an HTH lysR-type domain in the interval 1–60 (MDPKISYFQTFIVASKTKSFSKAAKRLGITQGTVSNHISALEKYFDAQLFLRTPEGVDLT). A DNA-binding region (H-T-H motif) is located at residues 20–39 (FSKAAKRLGITQGTVSNHIS).

It belongs to the LysR transcriptional regulatory family.

This is an uncharacterized protein from Methanocaldococcus jannaschii (strain ATCC 43067 / DSM 2661 / JAL-1 / JCM 10045 / NBRC 100440) (Methanococcus jannaschii).